A 55-amino-acid chain; its full sequence is Large ribosomal subunit protein bL33 (55 aa).

This sequence belongs to the bacterial ribosomal protein bL33 family.

The sequence is that of Large ribosomal subunit protein bL33 from Yersinia enterocolitica serotype O:8 / biotype 1B (strain NCTC 13174 / 8081).